We begin with the raw amino-acid sequence, 106 residues long: Large ribosomal subunit protein eL36 (106 aa).

The span at 75–93 (VRQEKVGHSQESKEEERGD) shows a compositional bias: basic and acidic residues. The interval 75-106 (VRQEKVGHSQESKEEERGDVQCSPPDEGWWWY) is disordered.

Belongs to the eukaryotic ribosomal protein eL36 family.

In Daucus carota (Wild carrot), this protein is Large ribosomal subunit protein eL36 (RPL36).